A 348-amino-acid chain; its full sequence is Glucokinase (348 aa).

14–19 contacts ATP; sequence GDVGGS. Residues 327–348 are disordered; it reads SDPAPVAAPTHPRGGTAGDMHA.

This sequence belongs to the bacterial glucokinase family.

The protein resides in the cytoplasm. The enzyme catalyses D-glucose + ATP = D-glucose 6-phosphate + ADP + H(+). This chain is Glucokinase, found in Chromobacterium violaceum (strain ATCC 12472 / DSM 30191 / JCM 1249 / CCUG 213 / NBRC 12614 / NCIMB 9131 / NCTC 9757 / MK).